The following is a 142-amino-acid chain: Small ribosomal subunit protein bS6 (142 aa).

The segment at 110 to 142 is disordered; it reads NKKPSHAKEKHEKTEHAHSHHAEEAKSTESHSE.

This sequence belongs to the bacterial ribosomal protein bS6 family.

Functionally, binds together with bS18 to 16S ribosomal RNA. The protein is Small ribosomal subunit protein bS6 of Helicobacter pylori (strain G27).